The primary structure comprises 897 residues: DNA endonuclease RBBP8 (897 aa).

The segment at 22 to 45 (DLWTKLKECHDREVQGLQVKVTKL) is essential for binding to the MRN complex and for RPA focus formation on DNA damage. The stretch at 35 to 84 (VQGLQVKVTKLKQERILDAQRLEEFFTKNQQLREQQKVLHETIKVLEDRL) forms a coiled coil. The tract at residues 45–160 (LKQERILDAQ…AELECEEDVI (116 aa)) is required for interaction with LMO4, probably by stabilizing the interaction through RPPB8 dimerization. Residues K62 and K115 each participate in a glycyl lysine isopeptide (Lys-Gly) (interchain with G-Cter in SUMO2) cross-link. Residues 117-138 (ITELMNERNTLQEENKKLSEQL) are a coiled coil. A Glycyl lysine isopeptide (Lys-Gly) (interchain with G-Cter in SUMO2) cross-link involves residue K193. A phosphoserine mark is found at S233 and S276. Positions 292–307 (KQPFEESTRNTEDSLR) are enriched in basic and acidic residues. Positions 292-325 (KQPFEESTRNTEDSLRFSDSTSKTPPQEELPTRV) are disordered. A Phosphothreonine; by CDK2 modification is found at T315. Residues S326, S327, and S349 each carry the phosphoserine modification. Glycyl lysine isopeptide (Lys-Gly) (interchain with G-Cter in SUMO2) cross-links involve residues K360 and K378. Position 379 is a phosphoserine (S379). Glycyl lysine isopeptide (Lys-Gly) (interchain with G-Cter in SUMO2) cross-links involve residues K396, K404, and K410. The disordered stretch occupies residues 419–464 (QNRTEYGKDSNTDKHLEPLKSLGGRTSKRKKTEEESEHEVSCPQAS). A compositionally biased stretch (basic and acidic residues) spans 420-436 (NRTEYGKDSNTDKHLEP). Glycyl lysine isopeptide (Lys-Gly) (interchain with G-Cter in SUMO2) cross-links involve residues K438 and K449. The short motif at 490–494 (PLDLS) is the PXDLS motif element. Residues 509 to 557 (SETSKNKFRQVTLYEALKTIPKGFSSSRKASDGNCTLPKDSPGEPCSQE) are damage-recruitment motif. Residue K526 forms a Glycyl lysine isopeptide (Lys-Gly) (interchain with G-Cter in SUMO2); alternate linkage. Residues K530, K572, and K578 each participate in a glycyl lysine isopeptide (Lys-Gly) (interchain with G-Cter in SUMO2) cross-link. Residue K604 forms a Glycyl lysine isopeptide (Lys-Gly) (interchain with G-Cter in SUMO2); alternate linkage. Residues K613, K638, and K640 each participate in a glycyl lysine isopeptide (Lys-Gly) (interchain with G-Cter in SUMO2) cross-link. The segment at 641-685 (SLQNNQDVSFENIQWSIDPGADLSQYKMDVTVIDTKDGSQSKLGG) is required for interaction with LMO4, probably by making physical contact with LMO4. Phosphoserine; by ATM is present on S664. K676 is covalently cross-linked (Glycyl lysine isopeptide (Lys-Gly) (interchain with G-Cter in SUMO2)). Residue S679 is modified to Phosphoserine. Residues 704-723 (KKQEQKGEKSSNEERKMNDS) are disordered. Residue K719 forms a Glycyl lysine isopeptide (Lys-Gly) (interchain with G-Cter in SUMO2) linkage. At S723 the chain carries Phosphoserine. Position 745 is a phosphoserine; by ATM (S745). A Glycyl lysine isopeptide (Lys-Gly) (interchain with G-Cter in SUMO2) cross-link involves residue K782. Positions 840 to 842 (FRY) match the KLHL15-binding motif. T847 bears the Phosphothreonine; by CDK1 mark. At T859 the chain carries Phosphothreonine; by ATR. K869 participates in a covalent cross-link: Glycyl lysine isopeptide (Lys-Gly) (interchain with G-Cter in SUMO2). The disordered stretch occupies residues 873-897 (DPCPRPKRRQPYNAIFSPKGKEQKT).

Belongs to the COM1/SAE2/CtIP family. In terms of assembly, homotetramer; formed by antiparallel association of helical extensions protruding from the N-termini of two parallel coiled-coil dimers. Forms a dumbbell-shaped particle in which polar globular domains are held about 30 nm apart by a central rod. Homotetramerization is required for DNA-end resection and repair. Interacts (via the PXDLS motif) with CTBP1; the interaction is disrupted via binding of the adenovirus E1A to CTBP1. Component of the BRCA1-RBBP8 complex. Interacts (the Ser-327 phosphorylated form) with BRCA1 (via the C-terminal BRCT domains): the interaction occurs in the G2 phase, ubiquitinates RBBP8 and involves RBBP8 in BRCA1-dependent G2/M checkpoint control on DNA damage. Interacts with RB1. Interacts with the MRN complex; interacts directly with MRE11; the interaction is required for efficient homologous recombination (HR) and regulation of the MRN complex. Interacts directly with RAD50. Interacts (when phosphorylated by CDK1) with NBN; promoting association with the MRN complex. Interacts with LM04 (via the LIM zinc-binding 1 domain). Interacts with SIAH1. Interacts with RNF138. Interacts with EXD2. Interacts with CUL3 and KLHL15; this interaction leads to RBBP8 proteasomal degradation. Directly interacts with PIN1; this interaction depends upon RBBP8 phosphorylation, predominantly at Thr-315. Interacts with FZR1; this interaction leads to APC/C-mediated RBBP8 proteasomal degradation. Interacts with AUNIP; leading to recruitment of RBBP8 to sites of DNA damage. Interacts with SAMHD1. Interacts with HDGFL2. Hyperphosphorylation upon ionizing radiation results in dissociation from BRCA1. Phosphorylation at Thr-847 by CDK1 is essential for the recruitment to DNA and the DNA repair function. Phosphorylation at Thr-847 and Thr-859 promote interaction with NBN and recruitment to double-strand breaks (DSBs). Phosphorylated on Ser-327 as cells enter G2 phase. This phosphorylation is required for binding BRCA1 and for the G2/M DNA damage transition checkpoint control. Phosphorylation at Thr-315, probably catalyzed by CDK2, is required for PIN1-binding, while phosphorylation at Ser-276 serves as a PIN1 isomerization site. Phosphorylation at Thr-315 is cell-cycle dependent. It steadily increases during S phase, peaks at late S/G2 phase, and drops at G1. Phosphorylation is not required for tetramerization. Binds to DNA more strongly when dephosphorylated. In terms of processing, ubiquitinated. Ubiquitination at multiple sites by BRCA1 (via its N-terminal RING domain) does not lead to its proteasomal degradation but instead the ubiquitinated RBBP8 binds to chromatin following DNA damage and may play a role in G2/M checkpoint control. Ubiquitinated by RNF138 at its N-terminus. Ubiquitinated through 'Lys-48' by the E3 CUL3-KLHL15 complex; this modification leads to proteasomal degradation. Ubiquitinated by the E3 FZR1/APC/C complex; this modification leads to proteasomal degradation. Expressed in ER-positive breast cancer lines, but tends to be down-regulated ER-negative cells (at protein level).

The protein resides in the nucleus. The protein localises to the chromosome. Endonuclease that cooperates with the MRE11-RAD50-NBN (MRN) complex in DNA-end resection, the first step of double-strand break (DSB) repair through the homologous recombination (HR) pathway. HR is restricted to S and G2 phases of the cell cycle and preferentially repairs DSBs resulting from replication fork collapse. Key determinant of DSB repair pathway choice, as it commits cells to HR by preventing classical non-homologous end-joining (NHEJ). Specifically promotes the endonuclease activity of the MRN complex to clear DNA ends containing protein adducts: recruited to DSBs by NBN following phosphorylation by CDK1, and promotes the endonuclease activity of MRE11 to clear protein-DNA adducts and generate clean double-strand break ends. Functions downstream of the MRN complex and ATM, promotes ATR activation and its recruitment to DSBs in the S/G2 phase facilitating the generation of ssDNA. Component of the BRCA1-RBBP8 complex that regulates CHEK1 activation and controls cell cycle G2/M checkpoints on DNA damage. During immunoglobulin heavy chain class-switch recombination, promotes microhomology-mediated alternative end joining (A-NHEJ) and plays an essential role in chromosomal translocations. Binds preferentially to DNA Y-junctions and to DNA substrates with blocked ends and promotes intermolecular DNA bridging. The polypeptide is DNA endonuclease RBBP8 (RBBP8) (Homo sapiens (Human)).